Here is a 116-residue protein sequence, read N- to C-terminus: Holo-[acyl-carrier-protein] synthase (116 aa).

Positions 8 and 50 each coordinate Mg(2+).

It belongs to the P-Pant transferase superfamily. AcpS family. Mg(2+) serves as cofactor.

Its subcellular location is the cytoplasm. The enzyme catalyses apo-[ACP] + CoA = holo-[ACP] + adenosine 3',5'-bisphosphate + H(+). In terms of biological role, transfers the 4'-phosphopantetheine moiety from coenzyme A to a Ser of acyl-carrier-protein. This is Holo-[acyl-carrier-protein] synthase from Beutenbergia cavernae (strain ATCC BAA-8 / DSM 12333 / CCUG 43141 / JCM 11478 / NBRC 16432 / NCIMB 13614 / HKI 0122).